We begin with the raw amino-acid sequence, 435 residues long: Homoserine dehydrogenase (435 aa).

Thr13, Val14, Arg43, and Lys105 together coordinate NADPH. Val14 serves as a coordination point for NAD(+). NADP(+) is bound by residues Val14, Arg43, and Lys105. Na(+) is bound by residues Glu129, Val132, Gly134, and Ile136. The active-site Proton donor is Lys204. Disordered stretches follow at residues 255–274 (ARGVELARAPDPDPRETPDR) and 377–402 (RCDDSEGNRRQAERRRSGRHHHPDHV). Composition is skewed to basic and acidic residues over residues 262–274 (RAPDPDPRETPDR) and 377–391 (RCDDSEGNRRQAERR).

It belongs to the homoserine dehydrogenase family. It depends on a metal cation as a cofactor.

The enzyme catalyses L-homoserine + NADP(+) = L-aspartate 4-semialdehyde + NADPH + H(+). The catalysed reaction is L-homoserine + NAD(+) = L-aspartate 4-semialdehyde + NADH + H(+). Its pathway is amino-acid biosynthesis; L-methionine biosynthesis via de novo pathway; L-homoserine from L-aspartate: step 3/3. It participates in amino-acid biosynthesis; L-threonine biosynthesis; L-threonine from L-aspartate: step 3/5. Functionally, catalyzes the conversion of L-aspartate-beta-semialdehyde (L-Asa) to L-homoserine (L-Hse), the third step in the biosynthesis of threonine and methionine from aspartate. The polypeptide is Homoserine dehydrogenase (hom) (Methylobacillus glycogenes).